We begin with the raw amino-acid sequence, 368 residues long: Agmatine deiminase (368 aa).

The active-site Amidino-cysteine intermediate is the Cys-357.

Belongs to the agmatine deiminase family. In terms of assembly, homodimer.

The enzyme catalyses agmatine + H2O = N-carbamoylputrescine + NH4(+). The protein operates within amine and polyamine biosynthesis; putrescine biosynthesis via agmatine pathway; N-carbamoylputrescine from agmatine: step 1/1. Its function is as follows. Mediates the hydrolysis of agmatine into N-carbamoylputrescine in the arginine decarboxylase (ADC) pathway of putrescine biosynthesis, a basic polyamine. This Pseudomonas savastanoi pv. phaseolicola (strain 1448A / Race 6) (Pseudomonas syringae pv. phaseolicola (strain 1448A / Race 6)) protein is Agmatine deiminase.